A 348-amino-acid chain; its full sequence is MKGLYFQQSSTNEEVTFVFQEKENVPVTEDNFVRVQVKACALSHINTKLLAEMKMEKDFFPVGREVSGIVLEVGRKVTFFQPDDEVVGILPLDSEDPGLCEVIRVHEHYLVHKPEKVSWTEAAGVIRDGVRACTALYYLSQLSPGKSVLIMDGASAFGTIAIQLAHHRGAKVISTAHSLEDKQHLERLRPSIARVIDVSNGKVHVAESCLEETGGLGVDIVIDAGVRLYSKDDEPAVKLHLPHKHDIITLLGVGGHWVTTEENLQLDPPDSHCLFLKGATVAFLNDEVWNLSNAQQGKYLCILKDVMEKLSAGVFRPLLDEPIPLYEAKVSMEVVQKNQERKKQVVQF.

This sequence belongs to the zinc-containing alcohol dehydrogenase family. Quinone oxidoreductase subfamily. As to quaternary structure, component of the FERRY complex composed of five subunits, TBCK, PPP1R21, FERRY3, CRYZL1 and GATD1 with a ratio of 1:2:1:2:4, respectively.

The protein localises to the early endosome. In terms of biological role, component of the FERRY complex (Five-subunit Endosomal Rab5 and RNA/ribosome intermediary). The FERRY complex directly interacts with mRNAs and RAB5A, and functions as a RAB5A effector involved in the localization and the distribution of specific mRNAs most likely by mediating their endosomal transport. The complex recruits mRNAs and ribosomes to early endosomes through direct mRNA-interaction. This chain is Quinone oxidoreductase-like protein 1 (Cryzl1), found in Mus musculus (Mouse).